We begin with the raw amino-acid sequence, 366 residues long: Peptide chain release factor 2 (366 aa).

Gln249 is modified (N5-methylglutamine).

This sequence belongs to the prokaryotic/mitochondrial release factor family. In terms of processing, methylated by PrmC. Methylation increases the termination efficiency of RF2.

The protein localises to the cytoplasm. Its function is as follows. Peptide chain release factor 2 directs the termination of translation in response to the peptide chain termination codons UGA and UAA. The polypeptide is Peptide chain release factor 2 (Petrotoga mobilis (strain DSM 10674 / SJ95)).